The sequence spans 372 residues: N-acetyllactosaminide beta-1,3-N-acetylglucosaminyltransferase 3 (372 aa).

Over 1-10 the chain is Cytoplasmic; it reads MKYLRHRRPN. A helical; Signal-anchor for type II membrane protein membrane pass occupies residues 11–31; the sequence is ATLILAIGAFTLLLFSLLVSP. Over 32 to 372 the chain is Lumenal; the sequence is PTCKVQEQPP…LTCGNQTQIY (341 aa). Residues N64, N184, N202, N362, and N367 are each glycosylated (N-linked (GlcNAc...) asparagine).

The protein belongs to the glycosyltransferase 31 family. Expressed in colon, jejunum, stomach, esophagus, placenta and trachea.

It localises to the golgi apparatus membrane. The catalysed reaction is a 3-O-{beta-D-galactosyl-(1-&gt;3)-[N-acetyl-beta-D-glucosaminyl-(1-&gt;6)]-N-acetyl-alpha-D-galactosaminyl}-L-threonyl-[protein] + UDP-N-acetyl-alpha-D-glucosamine = 3-O-{beta-D-GlcNAc-(1-&gt;3)-beta-D-Gal-(1-&gt;3)-[beta-D-GlcNAc-(1-&gt;6)]-alpha-D-GalNAc}-L-threonyl-[protein] + UDP + H(+). The enzyme catalyses 3-O-{beta-D-galactosyl-(1-&gt;3)-[N-acetyl-beta-D-glucosaminyl-(1-&gt;6)]-N-acetyl-alpha-D-galactosaminyl}-L-seryl-[protein] + UDP-N-acetyl-alpha-D-glucosamine = 3-O-{beta-D-GlcNAc-(1-&gt;3)-beta-D-Gal-(1-&gt;3)-[beta-D-GlcNAc-(1-&gt;6)]-alpha-D-GalNAc}-L-seryl-[protein] + UDP + H(+). It catalyses the reaction a beta-D-galactosyl-(1-&gt;4)-N-acetyl-beta-D-glucosaminyl derivative + UDP-N-acetyl-alpha-D-glucosamine = an N-acetyl-beta-D-glucosaminyl-(1-&gt;3)-beta-D-galactosyl-(1-&gt;4)-N-acetyl-beta-D-glucosaminyl derivative + UDP + H(+). The protein operates within protein modification; protein glycosylation. Beta-1,3-N-acetylglucosaminyltransferase involved in the synthesis of poly-N-acetyllactosamine. Has activity for type 2 oligosaccharides. Also acts as a core1-1,3-N-acetylglucosaminyltransferase (Core1-beta3GlcNAcT) to form the 6-sulfo sialyl Lewis x on extended core1 O-glycans. This Homo sapiens (Human) protein is N-acetyllactosaminide beta-1,3-N-acetylglucosaminyltransferase 3 (B3GNT3).